Reading from the N-terminus, the 380-residue chain is Protein Wnt-5a (380 aa).

A signal peptide spans 1 to 35 (MKKSIGILSPGVALGTAGSAMSSKFFVMALAVFFS). The propeptide occupies 36-61 (FAQVVIEANSWWSLGMNNPVQMSEVY). A disulfide bond links C104 and C115. N114 and N120 each carry an N-linked (GlcNAc...) asparagine glycan. 10 disulfides stabilise this stretch: C154-C162, C164-C182, C238-C252, C240-C247, C309-C340, C325-C335, C339-C379, C355-C370, C357-C367, and C362-C363. S244 carries the O-palmitoleoyl serine; by PORCN lipid modification. 2 N-linked (GlcNAc...) asparagine glycosylation sites follow: N312 and N326.

Belongs to the Wnt family. In terms of assembly, forms a soluble 1:1 complex with AFM; this prevents oligomerization and is required for prolonged biological activity. The complex with AFM may represent the physiological form in body fluids. Homooligomer; disulfide-linked, leading to inactivation (in vitro). Interacts with PORCN. Interacts with WLS. Interacts with glypican GCP3. Interacts with PKD1 (via extracellular domain). Interacts with TMEM67. In terms of processing, glycosylation is necessary for secretion but not for activity. Palmitoleoylation is required for efficient binding to frizzled receptors. Depalmitoleoylation leads to Wnt signaling pathway inhibition. Post-translationally, proteolytic processing by TIKI1 and TIKI2 promotes oxidation and formation of large disulfide-bond oligomers, leading to inactivation of WNT5A.

The protein localises to the secreted. Its subcellular location is the extracellular space. It localises to the extracellular matrix. Functionally, ligand for members of the frizzled family of seven transmembrane receptors. Can activate or inhibit canonical Wnt signaling, depending on receptor context. In the presence of FZD4, activates beta-catenin signaling. In the presence of ROR2, inhibits the canonical Wnt pathway by promoting beta-catenin degradation through a GSK3-independent pathway which involves down-regulation of beta-catenin-induced reporter gene expression. Suppression of the canonical pathway allows chondrogenesis to occur. Inhibits tumor formation. Stimulates cell migration. Decreases proliferation, migration, invasiveness and clonogenicity of carcinoma cells and may act as a tumor suppressor. Mediates motility of melanoma cells. Required during embryogenesis for extension of the primary anterior-posterior axis and for outgrowth of limbs and the genital tubercle. Inhibits type II collagen expression in chondrocytes. The polypeptide is Protein Wnt-5a (Oryctolagus cuniculus (Rabbit)).